Here is a 153-residue protein sequence, read N- to C-terminus: Actin-related protein 2/3 complex subunit 5-like protein (153 aa).

Position 64 is a phosphoserine (serine 64).

The protein belongs to the ARPC5 family. May be a component of the Arp2/3 complex in which it may replace ARPC5.

The protein localises to the cytoplasm. The protein resides in the cytoskeleton. Functionally, may function as component of the Arp2/3 complex which is involved in regulation of actin polymerization and together with an activating nucleation-promoting factor (NPF) mediates the formation of branched actin networks. The sequence is that of Actin-related protein 2/3 complex subunit 5-like protein (ARPC5L) from Pongo abelii (Sumatran orangutan).